The sequence spans 226 residues: Putative ABC transporter ATP-binding protein BH02760 (226 aa).

Residues 4–222 (IKFDKVTQVF…IPLVAIKEYI (219 aa)) enclose the ABC transporter domain. 35-42 (GANGSGKS) serves as a coordination point for ATP.

This sequence belongs to the ABC transporter superfamily.

The protein localises to the cell inner membrane. Its function is as follows. Probably part of an ABC transporter complex. Responsible for energy coupling to the transport system. The chain is Putative ABC transporter ATP-binding protein BH02760 from Bartonella henselae (strain ATCC 49882 / DSM 28221 / CCUG 30454 / Houston 1) (Rochalimaea henselae).